The sequence spans 45 residues: Cytochrome b559 subunit beta (45 aa).

An N-acetylthreonine modification is found at Thr-2. Over 2–17 the chain is Cytoplasmic; the sequence is TSNTPNQEPVSYPIFT. The helical transmembrane segment at 18–42 threads the bilayer; it reads VRWVAVHTLAVPTIFFLGAIAAMQF. Residue His-24 coordinates heme. The Lumenal portion of the chain corresponds to 43–45; it reads IQR.

In terms of assembly, heterodimer of an alpha subunit and a beta subunit. PSII is composed of 1 copy each of membrane proteins PsbA, PsbB, PsbC, PsbD, PsbE, PsbF, PsbH, PsbI, PsbJ, PsbK, PsbL, PsbM, PsbT, PsbX, PsbY, PsbZ, Psb30/Ycf12, peripheral proteins PsbO, CyanoQ (PsbQ), PsbU, PsbV and a large number of cofactors. It forms dimeric complexes. Part of a photosystem II (PSII) assembly intermediate complex PSII-I; crystallized from a strain deleted of psbJ, it forms monomeric PSII before addition of the oxygen evolving complex. PSII-I includes 3 assembly factors not found in mature PSII (Psb27, Psb28 and Psb34). Heme b serves as cofactor.

The protein resides in the cellular thylakoid membrane. In terms of biological role, this b-type cytochrome is tightly associated with the reaction center of photosystem II (PSII). PSII is a light-driven water:plastoquinone oxidoreductase that uses light energy to abstract electrons from H(2)O, generating O(2) and a proton gradient subsequently used for ATP formation. It consists of a core antenna complex that captures photons, and an electron transfer chain that converts photonic excitation into a charge separation. The chain is Cytochrome b559 subunit beta from Thermosynechococcus vestitus (strain NIES-2133 / IAM M-273 / BP-1).